We begin with the raw amino-acid sequence, 120 residues long: Late cornified envelope-like proline-rich protein 1 (120 aa).

The protein belongs to the cornifin (SPRR) family.

The sequence is that of Late cornified envelope-like proline-rich protein 1 (Lelp1) from Mus musculus (Mouse).